The following is a 140-amino-acid chain: UPF0134 protein MPN_130 (140 aa).

Belongs to the UPF0134 family.

The protein is UPF0134 protein MPN_130 of Mycoplasma pneumoniae (strain ATCC 29342 / M129 / Subtype 1) (Mycoplasmoides pneumoniae).